We begin with the raw amino-acid sequence, 1365 residues long: Serine/threonine-protein kinase LMTK1 (1365 aa).

Residues 32–52 form a helical membrane-spanning segment; sequence LAVVAVSFSGIFTVVILMLAC. Residues 126 to 396 enclose the Protein kinase domain; the sequence is LLYLKEIGHG…PTAEEVHLLL (271 aa). Residues 132–140 and lysine 157 each bind ATP; that span reads IGHGWFGKV. Residue aspartate 254 is the Proton acceptor of the active site. Serine 500 is subject to Phosphoserine. Disordered stretches follow at residues 550–623, 638–698, 791–1186, 1237–1293, and 1343–1365; these read PDCA…LPAE, DDPL…GYVS, QEAE…PAVP, ESPT…EWDG, and ISDS…YTEA. Over residues 560-575 the composition is skewed to polar residues; it reads QAVTDQDNNSEESTVA. Composition is skewed to low complexity over residues 638–655 and 675–686; these read DDPL…QPSP and SSNMSANNNSAS. Polar residues-rich tracts occupy residues 848-860 and 869-879; these read LESS…QEAP and EATSGVFTDLS. 2 stretches are compositionally biased toward low complexity: residues 904 to 918 and 981 to 993; these read PDSL…SASD and PLLS…LSKK. Positions 1015–1030 are enriched in basic and acidic residues; the sequence is PEKHSGIQDSQKEQDL. At serine 1035 the chain carries Phosphoserine. The span at 1037–1053 shows a compositional bias: polar residues; that stretch reads GHQSVQAFPRSAVSSEV. Residues 1072 to 1083 show a composition bias toward low complexity; it reads PLGAQGPVGVQP. Residues 1104-1132 show a composition bias toward polar residues; that stretch reads GSGTEPQGPSGQLSGRAQQGQMGNPSTPR. Acidic residues predominate over residues 1150 to 1164; that stretch reads PEEDEDTEDSEESDE. The residue at position 1156 (threonine 1156) is a Phosphothreonine. A phosphoserine mark is found at serine 1159, serine 1162, serine 1175, serine 1178, and serine 1253. The segment covering 1354 to 1365 has biased composition (gly residues); the sequence is PAAGAGGRYTEA.

This sequence belongs to the protein kinase superfamily. Tyr protein kinase family. In terms of assembly, interacts with CDK5. In terms of processing, autophosphorylated. Phosphorylated by CDK5. Expressed in brain, and, to a lower extent, in kidney, heart, lung and skeletal muscle. In the brain, expressed in the olfactory bulb, cerebellum, striatum, hippocampal formation, thalamus, hypothalamus, and pontine nuclei (at protein level).

The protein localises to the membrane. Its subcellular location is the cytoplasm. It localises to the perinuclear region. The protein resides in the cell projection. It is found in the dendrite. The protein localises to the axon. Its subcellular location is the growth cone. It carries out the reaction L-seryl-[protein] + ATP = O-phospho-L-seryl-[protein] + ADP + H(+). The catalysed reaction is L-threonyl-[protein] + ATP = O-phospho-L-threonyl-[protein] + ADP + H(+). Its function is as follows. May be involved in neuronal differentiation. This is Serine/threonine-protein kinase LMTK1 (Aatk) from Mus musculus (Mouse).